The chain runs to 79 residues: Acyl carrier protein (79 aa).

The Carrier domain occupies 2-77; the sequence is ESIEQRVKKI…QAIDYINSHG (76 aa). Residue S37 is modified to O-(pantetheine 4'-phosphoryl)serine.

Belongs to the acyl carrier protein (ACP) family. In terms of processing, 4'-phosphopantetheine is transferred from CoA to a specific serine of apo-ACP by AcpS. This modification is essential for activity because fatty acids are bound in thioester linkage to the sulfhydryl of the prosthetic group.

It localises to the cytoplasm. Its pathway is lipid metabolism; fatty acid biosynthesis. In terms of biological role, carrier of the growing fatty acid chain in fatty acid biosynthesis. This chain is Acyl carrier protein, found in Bordetella avium (strain 197N).